Reading from the N-terminus, the 685-residue chain is DNA ligase (685 aa).

Residues 47–51 (DSEYD), 96–97 (SL), and Glu125 each bind NAD(+). Lys127 functions as the N6-AMP-lysine intermediate in the catalytic mechanism. NAD(+) contacts are provided by Arg148, Glu185, Lys304, and Lys328. Zn(2+)-binding residues include Cys422, Cys425, Cys440, and Cys446. Residues 605–685 (ADAQPLKGQT…ALLALFAANR (81 aa)) enclose the BRCT domain.

It belongs to the NAD-dependent DNA ligase family. LigA subfamily. Mg(2+) is required as a cofactor. Requires Mn(2+) as cofactor.

The catalysed reaction is NAD(+) + (deoxyribonucleotide)n-3'-hydroxyl + 5'-phospho-(deoxyribonucleotide)m = (deoxyribonucleotide)n+m + AMP + beta-nicotinamide D-nucleotide.. Its function is as follows. DNA ligase that catalyzes the formation of phosphodiester linkages between 5'-phosphoryl and 3'-hydroxyl groups in double-stranded DNA using NAD as a coenzyme and as the energy source for the reaction. It is essential for DNA replication and repair of damaged DNA. The chain is DNA ligase from Shewanella putrefaciens (strain CN-32 / ATCC BAA-453).